The primary structure comprises 281 residues: Shikimate dehydrogenase (NADP(+)) (281 aa).

Residues 14–16 and Thr61 contribute to the shikimate site; that span reads SRS. Lys65 acts as the Proton acceptor in catalysis. Residues Asn86 and Asp101 each coordinate shikimate. Residues 127–131, 151–156, and Val216 contribute to the NADP(+) site; these read GAGGA and NRTLAR. Tyr218 contacts shikimate. Position 239 (Gly239) interacts with NADP(+).

The protein belongs to the shikimate dehydrogenase family. In terms of assembly, homodimer.

The enzyme catalyses shikimate + NADP(+) = 3-dehydroshikimate + NADPH + H(+). The protein operates within metabolic intermediate biosynthesis; chorismate biosynthesis; chorismate from D-erythrose 4-phosphate and phosphoenolpyruvate: step 4/7. Functionally, involved in the biosynthesis of the chorismate, which leads to the biosynthesis of aromatic amino acids. Catalyzes the reversible NADPH linked reduction of 3-dehydroshikimate (DHSA) to yield shikimate (SA). The protein is Shikimate dehydrogenase (NADP(+)) of Azorhizobium caulinodans (strain ATCC 43989 / DSM 5975 / JCM 20966 / LMG 6465 / NBRC 14845 / NCIMB 13405 / ORS 571).